The chain runs to 125 residues: GFDCPFGWSSYEGYCYKVYNKKMNWEDAESFCREQHKRSHLVSFHSSGEVDFVVSKTFPILRYDFVWMGLSDIWKECTKEWSDGARLDYKAWSGKSYCLVSKTTNNEWLSMDCSRTRYPVCKFXG.

Residues 1–125 enclose the C-type lectin domain; the sequence is GFDCPFGWSS…TRYPVCKFXG (125 aa). 3 disulfide bridges follow: Cys-4/Cys-15, Cys-32/Cys-121, and Cys-98/Cys-113.

It belongs to the snaclec family. As to quaternary structure, heterotetramer of the subunits alpha, alpha', beta and beta'; disulfide-linked. Expressed by the venom gland.

It is found in the secreted. Its function is as follows. Potent platelet activator that aggregates platelets via both GPIbalpha (GP1BA) and GPVI (GP6). Induces a tyrosine phosphorylation profile in platelets that resembles this produced by collagen, involving the time dependent tyrosine phosphorylation of Fc receptor gamma chain (FCGR1A), phospholipase Cgamma2 (PLCG2), and LAT. In Trimeresurus albolabris (White-lipped pit viper), this protein is Snaclec alboaggregin-A subunit beta.